The following is a 167-amino-acid chain: Probable membrane-bound hydrogenase subunit mbhJ (167 aa).

[4Fe-4S] cluster-binding residues include Cys-35, Cys-38, Cys-102, and Cys-132.

Belongs to the complex I 20 kDa subunit family. The membrane-bound hydrogenase complex is composed of MbhK and MbhL, but may also contain MbhJ. It depends on [4Fe-4S] cluster as a cofactor.

The protein resides in the cell membrane. The enzyme catalyses H2 + 2 oxidized [2Fe-2S]-[ferredoxin] = 2 reduced [2Fe-2S]-[ferredoxin] + 2 H(+). With respect to regulation, inhibited by 0.1 mM Cu(2+). Probable subunit of a hydrogen-evolving hydrogenase that utilizes protons both as a substrate for hydrogen production and proton translocation. Acts by coupling the redox reaction via ferredoxin and iron-sulfur (Fe-S) clusters to proton translocation across the membrane, thereby conserving the redox energy in a proton gradient. The protein is Probable membrane-bound hydrogenase subunit mbhJ of Pyrococcus furiosus (strain ATCC 43587 / DSM 3638 / JCM 8422 / Vc1).